The sequence spans 565 residues: Effector protease OspD3 (565 aa).

The protein belongs to the Toxin_15 family.

Its subcellular location is the secreted. Effector protease that disrupts necroptosis in host cells by mediating proteolytic cleavage of host RIPK1 and RIPK3. This chain is Effector protease OspD3, found in Shigella flexneri.